We begin with the raw amino-acid sequence, 803 residues long: Protein translocase subunit SecA (803 aa).

ATP-binding positions include glutamine 100, 118–122, and aspartate 508; that span reads GEGKT.

The protein belongs to the SecA family. Monomer and homodimer. Part of the essential Sec protein translocation apparatus which comprises SecA, SecYEG and auxiliary proteins SecDF. Other proteins may also be involved.

Its subcellular location is the cell membrane. It is found in the cytoplasm. It catalyses the reaction ATP + H2O + cellular proteinSide 1 = ADP + phosphate + cellular proteinSide 2.. Its function is as follows. Part of the Sec protein translocase complex. Interacts with the SecYEG preprotein conducting channel. Has a central role in coupling the hydrolysis of ATP to the transfer of proteins into and across the cell membrane, serving as an ATP-driven molecular motor driving the stepwise translocation of polypeptide chains across the membrane. The sequence is that of Protein translocase subunit SecA from Leuconostoc mesenteroides subsp. mesenteroides (strain ATCC 8293 / DSM 20343 / BCRC 11652 / CCM 1803 / JCM 6124 / NCDO 523 / NBRC 100496 / NCIMB 8023 / NCTC 12954 / NRRL B-1118 / 37Y).